A 218-amino-acid polypeptide reads, in one-letter code: Large ribosomal subunit protein bL25 (218 aa).

The segment at 187–218 (SATAAVEEAKEDGAPEESAQGQGAAEAQETNK) is disordered. A compositionally biased stretch (low complexity) spans 202–218 (EESAQGQGAAEAQETNK).

This sequence belongs to the bacterial ribosomal protein bL25 family. CTC subfamily. As to quaternary structure, part of the 50S ribosomal subunit; part of the 5S rRNA/L5/L18/L25 subcomplex. Contacts the 5S rRNA. Binds to the 5S rRNA independently of L5 and L18.

Functionally, this is one of the proteins that binds to the 5S RNA in the ribosome where it forms part of the central protuberance. The protein is Large ribosomal subunit protein bL25 of Anaplasma marginale (strain St. Maries).